The chain runs to 1171 residues: ATP-dependent helicase/deoxyribonuclease subunit B (1171 aa).

A UvrD-like helicase ATP-binding domain is found at 1–287 (MSLRFVIGRA…IPLMEQPRFH (287 aa)). Residue 8–15 (GRAGSGKS) participates in ATP binding. The UvrD-like helicase C-terminal domain occupies 281-587 (MEQPRFHSPA…QFANIPPSLD (307 aa)). 4 residues coordinate [4Fe-4S] cluster: Cys-805, Cys-1129, Cys-1132, and Cys-1138.

Belongs to the helicase family. AddB/RexB type 1 subfamily. As to quaternary structure, heterodimer of AddA and AddB. The cofactor is Mg(2+). [4Fe-4S] cluster serves as cofactor.

In terms of biological role, the heterodimer acts as both an ATP-dependent DNA helicase and an ATP-dependent, dual-direction single-stranded exonuclease. Recognizes the chi site generating a DNA molecule suitable for the initiation of homologous recombination. The AddB subunit has 5' -&gt; 3' nuclease activity but not helicase activity. This Bacillus cereus (strain G9842) protein is ATP-dependent helicase/deoxyribonuclease subunit B.